We begin with the raw amino-acid sequence, 158 residues long: 2-C-methyl-D-erythritol 2,4-cyclodiphosphate synthase (158 aa).

Residues D9 and H11 each contribute to the a divalent metal cation site. Residues 9–11 and 35–36 each bind 4-CDP-2-C-methyl-D-erythritol 2-phosphate; these read DVH and HS. H43 serves as a coordination point for a divalent metal cation. Residues 57–59, 62–66, 133–136, F140, and R143 contribute to the 4-CDP-2-C-methyl-D-erythritol 2-phosphate site; these read DIG, FPDTD, and TTSE.

This sequence belongs to the IspF family. Homotrimer. It depends on a divalent metal cation as a cofactor.

The enzyme catalyses 4-CDP-2-C-methyl-D-erythritol 2-phosphate = 2-C-methyl-D-erythritol 2,4-cyclic diphosphate + CMP. It functions in the pathway isoprenoid biosynthesis; isopentenyl diphosphate biosynthesis via DXP pathway; isopentenyl diphosphate from 1-deoxy-D-xylulose 5-phosphate: step 4/6. Functionally, involved in the biosynthesis of isopentenyl diphosphate (IPP) and dimethylallyl diphosphate (DMAPP), two major building blocks of isoprenoid compounds. Catalyzes the conversion of 4-diphosphocytidyl-2-C-methyl-D-erythritol 2-phosphate (CDP-ME2P) to 2-C-methyl-D-erythritol 2,4-cyclodiphosphate (ME-CPP) with a corresponding release of cytidine 5-monophosphate (CMP). This is 2-C-methyl-D-erythritol 2,4-cyclodiphosphate synthase from Pasteurella multocida (strain Pm70).